The chain runs to 126 residues: Probable small nuclear ribonucleoprotein Sm D1 (126 aa).

In terms of domain architecture, Sm spans 2–74 (KLVRFLMKLS…IRYIILPDPL (73 aa)). A disordered region spans residues 86-126 (RKKARAARAGASRGRGRGGMRGGRGGRGRGRGGPRGGGPRR). Basic residues predominate over residues 99 to 126 (GRGRGGMRGGRGGRGRGRGGPRGGGPRR).

It belongs to the snRNP core protein family.

The protein resides in the nucleus. The protein localises to the cytoplasm. It is found in the cytosol. Functionally, plays a role in pre-mRNA splicing as a core component of the spliceosomal U1, U2, U4 and U5 small nuclear ribonucleoproteins (snRNPs), the building blocks of the spliceosome. The polypeptide is Probable small nuclear ribonucleoprotein Sm D1 (snr-3) (Caenorhabditis elegans).